We begin with the raw amino-acid sequence, 521 residues long: Protein YjiT (521 aa).

The polypeptide is Protein YjiT (yjiT) (Escherichia coli (strain K12)).